The chain runs to 176 residues: MSRVAKAPVAIPAGVEVTLNEQTITVKGTKGSLTRVINADVSVVVEDNEIKCSSVEGVKTAAQAGTARALINNMVVGVTAGFEKKLQLIGVGYRAKIAGKGVDLTLGFSHPLVHELPDGVTAECPSQTEIVLKGTDKQLIGQVAAEIRGYRPPEPYKGKGVRYADEQVRRKEAKKK.

Basic and acidic residues predominate over residues 151 to 170 (RPPEPYKGKGVRYADEQVRR). The tract at residues 151–176 (RPPEPYKGKGVRYADEQVRRKEAKKK) is disordered.

It belongs to the universal ribosomal protein uL6 family. As to quaternary structure, part of the 50S ribosomal subunit.

This protein binds to the 23S rRNA, and is important in its secondary structure. It is located near the subunit interface in the base of the L7/L12 stalk, and near the tRNA binding site of the peptidyltransferase center. This chain is Large ribosomal subunit protein uL6, found in Shewanella piezotolerans (strain WP3 / JCM 13877).